The primary structure comprises 765 residues: MSWSISSNQLNIENLLNEESLFFTGNGYIGVRGNFEEKYYDGASSIRGTYINAFHDITDINYGEKLYAFPETQQKLVNVIDAQTVQIYFGEEEERFSLFEGEVIQYERHLHMDKGFSERVIHWRSPGGKEVKLKFKRLTSFIYKELFIQEITIEPVNFFGKTKVVSTVNGDVSNFVDPSDPRVGSGHAKLLTVSDTVIEGDFVSIETKTKRSNLYAACTSTCRLNIDFQREYVKNEKSVETVLTFELTEKAIMTKINIYTDTLRHGDRPLRTGLDLCQKLSCLTFNDLKEQQKHYLDKFWLYADVEISGDQALQEGIRFNLFHLLQSAGRDRFSNIAAKGLSGEGYEGHYFWDTEIYMVPVFLMTNPELAKQLLIYRYSILDKARERAREMGHRKGALFPWRTISGGECSSYFPAGTAQYHISADIAYSYVQYYLVTKDLDFLKSYGAELLIETARLWMDTGHYHEGKFKIDAVTGPDEYTCIVNNNYYTNVMAKHNLRWAAKSVAELEKHAPDTLASLKAKLEITDEEIAEWIKAAEAMYLPYDPTLNINPQDDTFLQKQVWDFDNTPKEHYPLLLHYHPLTLYRYQVCKQADTVLAHFLLEDEQDESVIRDSYHYYEKITTHDSSLSSCVFSIMAAKIGELDKAYEYFIETARLDLDNTHGNTKDGLHMANMGGTWMAIVYGFAGLRIKESGLSLAPVIPKQWQSYRFSIQYLGRHISVSVDTKGTKVNLLNGEELTIKLYGKKHQLTKDEPLEITFNNGRVD.

W352–D353 lines the substrate pocket. The Proton donor role is filled by E479. Substrate is bound at residue K591–Q592.

Belongs to the glycosyl hydrolase 65 family. In terms of assembly, homodimer.

The enzyme catalyses alpha,alpha-trehalose + phosphate = beta-D-glucose 1-phosphate + D-glucose. Its pathway is glycan degradation; trehalose degradation. Catalyzes the reversible phosphorolytic cleavage of trehalose. Phosphorolysis is specific for trehalose. In Geobacillus stearothermophilus (Bacillus stearothermophilus), this protein is Alpha,alpha-trehalose phosphorylase (treP).